The primary structure comprises 406 residues: Tryptophan 2,3-dioxygenase (406 aa).

A Phosphoserine modification is found at S19. Substrate contacts are provided by residues 72–76 and R144; that span reads FIITH. Residue H328 coordinates heme. Residue T342 participates in substrate binding.

The protein belongs to the tryptophan 2,3-dioxygenase family. Homotetramer. Dimer of dimers. Requires heme as cofactor.

The catalysed reaction is L-tryptophan + O2 = N-formyl-L-kynurenine. It functions in the pathway amino-acid degradation; L-tryptophan degradation via kynurenine pathway; L-kynurenine from L-tryptophan: step 1/2. Heme-dependent dioxygenase that catalyzes the oxidative cleavage of the L-tryptophan (L-Trp) pyrrole ring and converts L-tryptophan to N-formyl-L-kynurenine. Catalyzes the oxidative cleavage of the indole moiety. This Mus musculus (Mouse) protein is Tryptophan 2,3-dioxygenase.